The chain runs to 153 residues: Mediator of RNA polymerase II transcription subunit 22 (153 aa).

Belongs to the Mediator complex subunit 22 family. In terms of assembly, component of the Mediator complex.

It is found in the nucleus. In terms of biological role, component of the Mediator complex, a coactivator involved in the regulated transcription of nearly all RNA polymerase II-dependent genes. Mediator functions as a bridge to convey information from gene-specific regulatory proteins to the basal RNA polymerase II transcription machinery. Mediator is recruited to promoters by direct interactions with regulatory proteins and serves as a scaffold for the assembly of a functional preinitiation complex with RNA polymerase II and the general transcription factors. The protein is Mediator of RNA polymerase II transcription subunit 22 (mdt-22) of Caenorhabditis briggsae.